The following is a 197-amino-acid chain: dITP/XTP pyrophosphatase (197 aa).

11–16 (SHNAGK) lines the substrate pocket. Residues E42 and D71 each coordinate Mg(2+). The Proton acceptor role is filled by D71. Residues S72, 155–158 (FGYD), K178, and 183–184 (HR) each bind substrate.

It belongs to the HAM1 NTPase family. As to quaternary structure, homodimer. It depends on Mg(2+) as a cofactor.

The enzyme catalyses XTP + H2O = XMP + diphosphate + H(+). It catalyses the reaction dITP + H2O = dIMP + diphosphate + H(+). It carries out the reaction ITP + H2O = IMP + diphosphate + H(+). Functionally, pyrophosphatase that catalyzes the hydrolysis of nucleoside triphosphates to their monophosphate derivatives, with a high preference for the non-canonical purine nucleotides XTP (xanthosine triphosphate), dITP (deoxyinosine triphosphate) and ITP. Seems to function as a house-cleaning enzyme that removes non-canonical purine nucleotides from the nucleotide pool, thus preventing their incorporation into DNA/RNA and avoiding chromosomal lesions. This is dITP/XTP pyrophosphatase from Pseudomonas aeruginosa (strain ATCC 15692 / DSM 22644 / CIP 104116 / JCM 14847 / LMG 12228 / 1C / PRS 101 / PAO1).